An 85-amino-acid polypeptide reads, in one-letter code: Translation initiation factor IF-1 2 (85 aa).

One can recognise an S1-like domain in the interval 1 to 72 (MAKEELIEMQ…TKGRITFRHL (72 aa)).

This sequence belongs to the IF-1 family. Component of the 30S ribosomal translation pre-initiation complex which assembles on the 30S ribosome in the order IF-2 and IF-3, IF-1 and N-formylmethionyl-tRNA(fMet); mRNA recruitment can occur at any time during PIC assembly.

Its subcellular location is the cytoplasm. One of the essential components for the initiation of protein synthesis. Stabilizes the binding of IF-2 and IF-3 on the 30S subunit to which N-formylmethionyl-tRNA(fMet) subsequently binds. Helps modulate mRNA selection, yielding the 30S pre-initiation complex (PIC). Upon addition of the 50S ribosomal subunit IF-1, IF-2 and IF-3 are released leaving the mature 70S translation initiation complex. This chain is Translation initiation factor IF-1 2, found in Paracidovorax citrulli (strain AAC00-1) (Acidovorax citrulli).